A 407-amino-acid polypeptide reads, in one-letter code: Frizzled/smoothened-like sans CRD protein J (407 aa).

A signal peptide spans 1–23 (MKFLFSVILVIISFLGISKIVNG). Residues 24–89 (QIACPSPFLY…WNSFNKLVKQ (66 aa)) lie on the Extracellular side of the membrane. Residue Asn37 is glycosylated (N-linked (GlcNAc...) asparagine). A helical membrane pass occupies residues 90 to 110 (MGAVAFTCSAIIMIIYGPLMN). Residues 111 to 120 (RSFFKFDRHT) are Cytoplasmic-facing. Residues 121-141 (ITVFCFALSTFFIGVSDLMFA) form a helical membrane-spanning segment. Topologically, residues 142–169 (TNDVDMVCPESHRYARQTDKTCATNGVL) are extracellular. A helical membrane pass occupies residues 170–190 (FQFGWLGSVMWFAFLSIDGFF). Residues 191–199 (RASGKKMNK) are Cytoplasmic-facing. A helical membrane pass occupies residues 200 to 220 (IAFAIVLASIWILNIVLSFAP). Over 221-246 (MGGDQYGAYFVGQVNCWILVKNWQYA) the chain is Extracellular. A helical membrane pass occupies residues 247-267 (FFWAELIVSLAIGFVGICLTI). Topologically, residues 268–285 (YSLIRKTSDGNTLKHVTP) are cytoplasmic. The helical transmembrane segment at 286 to 306 (LILVFLLFCQYLYMIIFYGII) threads the bilayer. The Extracellular portion of the chain corresponds to 307 to 354 (NEKKDHYQNILAEQVGCIFNNALAKMKVPGIVYAGECTFNETITFSSQ). An N-linked (GlcNAc...) asparagine glycan is attached at Asn346. A helical transmembrane segment spans residues 355–375 (YAFLFFVRLLGIEIFAFYLFS). Over 376 to 407 (KETLLLIKSSYIATMFGLGDKDAYDVELEETD) the chain is Cytoplasmic.

It belongs to the G-protein coupled receptor Fz/Smo family.

It localises to the membrane. The sequence is that of Frizzled/smoothened-like sans CRD protein J (fscJ) from Dictyostelium discoideum (Social amoeba).